A 291-amino-acid chain; its full sequence is Tyramine--L-glutamate ligase (291 aa).

The ATP-grasp domain occupies 104 to 274 (KYPVKNLGCS…LAELLIKNAN (171 aa)). 131 to 176 (KDYVKTPKTFKPKKYVIKKIDGCGGKFNLFDENFLIQEFVEGESLS) is an ATP binding site. 3 residues coordinate Mg(2+): Asp236, Glu247, and Asn249. Positions 236, 247, and 249 each coordinate Mn(2+).

The cofactor is Mg(2+). Requires Mn(2+) as cofactor.

The enzyme catalyses tyramine + L-glutamate + ATP = gamma-L-glutamyltyramine + ADP + phosphate + H(+). It participates in cofactor biosynthesis; methanofuran biosynthesis. Functionally, catalyzes the formation of an amide bond between tyramine and the gamma carboxy group of L-glutamate. The enzyme also accepts phenylethylamine in vitro. This Methanocaldococcus fervens (strain DSM 4213 / JCM 15782 / AG86) (Methanococcus fervens) protein is Tyramine--L-glutamate ligase.